We begin with the raw amino-acid sequence, 62 residues long: Conotoxin Qc5.1 (62 aa).

A signal peptide spans 1–22 (MRCVPVFIILLLLSPSAPSVDA). A propeptide spanning residues 23–48 (HPMTKDDVPQASFHDDAKRTLQVPWM) is cleaved from the precursor. Position 60 is a valine amide (Val60).

This sequence belongs to the conotoxin T superfamily. In terms of processing, contains 2 disulfide bonds that can be either 'C1-C3, C2-C4' or 'C1-C4, C2-C3', since these disulfide connectivities have been observed for conotoxins with cysteine framework V (for examples, see AC P0DQQ7 and AC P81755). In terms of tissue distribution, expressed by the venom duct.

It is found in the secreted. The sequence is that of Conotoxin Qc5.1 from Conus quercinus (Oak cone).